We begin with the raw amino-acid sequence, 677 residues long: MTQVAKKILVTCALPYANGSIHLGHMLEHIQADVWVRYQRMRGHEVNFICADDAHGTPIMLKAQQLGITPEQMIGEMSQEHQTDFAGFNISYDNYHSTHSDENRELSELIYTRLKENGFIKNRTISQLYDPEKGMFLPDRFVKGTCPKCKSADQYGDNCEVCGATYSPTELIEPKSVVSGATPVMRDSEHFFFDLPSFSEMLQAWTRSGALQEQVANKMQEWFESGLQQWDISRDAPYFGFEIPNAPGKYFYVWLDAPIGYMGSFKNLCDKRGDTTSFDEYWKKDSDAELYHFIGKDIVYFHSLFWPAMLEGSHFRKPTNLFVHGYVTVNGAKMSKSRGTFIKASTWLKHFDADSLRYYYTAKLSSRIDDIDLNLEDFVQRVNADIVNKVVNLASRNAGFINKRFDGVLAAELADPQLYKTFTDAAAVIGEAWESREFGKAIREIMALADVANRYVDEQAPWVVAKQEGRDADLQAICSMGINLFRVLMTYLKPVLPTLSERVEAFLNSELNWDAIEQPLLSHKVNTFKALYNRIDMKQVEALVEASKEEVKAAAAPVTGPLADFPIQETITFDDFAKIDLRVALIENAEFVEGSDKLLRLTLDLGGEKRNVFSGIRSSYPDPQALIGRQTVMVANLAPRKMRFGVSEGMVMAAGPGGKDIFLLSPDDGAKPGQQVK.

The short motif at 15–25 (PYANGSIHLGH) is the 'HIGH' region element. The Zn(2+) site is built by Cys146, Cys149, Cys159, and Cys162. A 'KMSKS' region motif is present at residues 333-337 (KMSKS). Lys336 contributes to the ATP binding site. Residues 575–677 (DFAKIDLRVA…DGAKPGQQVK (103 aa)) enclose the tRNA-binding domain.

It belongs to the class-I aminoacyl-tRNA synthetase family. MetG type 1 subfamily. In terms of assembly, homodimer. Zn(2+) is required as a cofactor.

The protein localises to the cytoplasm. It carries out the reaction tRNA(Met) + L-methionine + ATP = L-methionyl-tRNA(Met) + AMP + diphosphate. Is required not only for elongation of protein synthesis but also for the initiation of all mRNA translation through initiator tRNA(fMet) aminoacylation. The chain is Methionine--tRNA ligase from Salmonella paratyphi C (strain RKS4594).